Reading from the N-terminus, the 132-residue chain is Ribosome-binding factor A (132 aa).

This sequence belongs to the RbfA family. As to quaternary structure, monomer. Binds 30S ribosomal subunits, but not 50S ribosomal subunits or 70S ribosomes.

The protein resides in the cytoplasm. Its function is as follows. One of several proteins that assist in the late maturation steps of the functional core of the 30S ribosomal subunit. Associates with free 30S ribosomal subunits (but not with 30S subunits that are part of 70S ribosomes or polysomes). Required for efficient processing of 16S rRNA. May interact with the 5'-terminal helix region of 16S rRNA. In Pseudomonas putida (strain ATCC 700007 / DSM 6899 / JCM 31910 / BCRC 17059 / LMG 24140 / F1), this protein is Ribosome-binding factor A.